The chain runs to 297 residues: GTP cyclohydrolase FolE2 (297 aa).

Belongs to the GTP cyclohydrolase IV family.

The catalysed reaction is GTP + H2O = 7,8-dihydroneopterin 3'-triphosphate + formate + H(+). It functions in the pathway cofactor biosynthesis; 7,8-dihydroneopterin triphosphate biosynthesis; 7,8-dihydroneopterin triphosphate from GTP: step 1/1. Its function is as follows. Converts GTP to 7,8-dihydroneopterin triphosphate. This is GTP cyclohydrolase FolE2 from Pseudomonas fluorescens (strain ATCC BAA-477 / NRRL B-23932 / Pf-5).